The primary structure comprises 477 residues: MHLPSSSSLYSSPTKSLFAMFLKARALSVTTQNPPDLFSLLHHSPNAKHLRHLHAHLLRTFLYSNVVLSSKLVLAYSKLNHLFPTSLSVFWHMPYRNIFSWNIIIGEFSRSGFASKSIDLFLRMWRESCVRPDDFTLPLILRACSASREAKSGDLIHVLCLKLGFSSSLFVSSALVIMYVDMGKLLHARKLFDDMPVRDSVLYTAMFGGYVQQGEAMLGLAMFREMGYSGFALDSVVMVSLLMACGQLGALKHGKSVHGWCIRRCSCLGLNLGNAITDMYVKCSILDYAHTVFVNMSRRDVISWSSLILGYGLDGDVVMSFKLFDEMLKEGIEPNAVTFLGVLSACAHGGLVEKSWLYFRLMQEYNIVPELKHYASVADCMSRAGLLEEAEKFLEDMPVKPDEAVMGAVLSGCKVYGNVEVGERVARELIQLKPRKASYYVTLAGLYSAAGRFDEAESLRQWMKEKQISKVPGCSSI.

10 PPR repeats span residues Asn65–Arg96, Asn97–Arg131, Asp133–Ser167, Ser168–Arg198, Asp199–Leu233, Asp234–Arg264, Gly269–Arg299, Asp300–Pro334, Asn335–Pro369, and Glu370–Lys400. The type E motif; degenerate stretch occupies residues Val405–Ile477.

It belongs to the PPR family. PCMP-E subfamily.

This chain is Pentatricopeptide repeat-containing protein At4g14170 (PCMP-E17), found in Arabidopsis thaliana (Mouse-ear cress).